Here is a 316-residue protein sequence, read N- to C-terminus: Insulin-like growth factor-binding protein 2 (316 aa).

Positions 1–29 (MLPRLGGTALSLLPLLLLLLGTGGRGARA) are cleaved as a signal peptide. The 96-residue stretch at 31–126 (VLFRCPPCTP…VLGEGTCEKR (96 aa)) folds into the IGFBP N-terminal domain. Cystine bridges form between Cys35–Cys76, Cys38–Cys78, Cys46–Cys79, Cys68–Cys82, Cys90–Cys103, and Cys97–Cys123. The segment at 189–217 (QHRQMGKGGKHHLGLEEPKKLRPPPARTP) is disordered. In terms of domain architecture, Thyroglobulin type-1 spans 215–297 (RTPCQQELDQ…APTIRGDPEC (83 aa)). Disulfide bonds link Cys218–Cys252, Cys263–Cys274, and Cys276–Cys297. A Cell attachment site motif is present at residues 292–294 (RGD).

As to quaternary structure, interacts with IGF1. Interacts with IGF2. Interacts (via RGD motif) with integrin alpha5/ITGA5; this interaction induces cell migration, adhesion or apoptosis according to the context. Interacts with PTPRB; this interaction leads to PTPRB dimerization and inactivation. Post-translationally, cleaved by MMP9 leading to release of free IGF2 from IGFBP2-IGF2 complex, which contributes to enhance the motility and the growth of astrocytes. In terms of processing, O-glycosylated.

Its subcellular location is the secreted. May have both growth-inhibiting and growth-promoting effects, depending on tissue type; increases IGF-induced DNA synthesis in the uterine epithelium. IGF-binding proteins prolong the half-life of the IGFs and have been shown to either inhibit or stimulate the growth promoting effects of the IGFs on cell culture. They alter the interaction of IGFs with their cell surface receptors. In terms of biological role, multifunctional protein that plays a critical role in regulating the availability of IGFs such as IGF1 and IGF2 to their receptors and thereby regulates IGF-mediated cellular processes including proliferation, differentiation, and apoptosis in a cell-type specific manner. Functions coordinately with receptor protein tyrosine phosphatase beta/PTPRB and the IGF1 receptor to regulate IGF1-mediated signaling by stimulating the phosphorylation of PTEN leading to its inactivation and AKT1 activation. Plays a positive role in cell migration via interaction with integrin alpha5/ITGA5 through an RGD motif. Additionally, interaction with ITGA5/ITGB1 enhances the adhesion of endothelial progenitor cells to endothelial cells. Upon mitochondrial damage, facilitates apoptosis with ITGA5 of podocytes, and then activates the phosphorylation of focal adhesion kinase (FAK)-mediated mitochondrial injury. The chain is Insulin-like growth factor-binding protein 2 (IGFBP2) from Sus scrofa (Pig).